A 189-amino-acid polypeptide reads, in one-letter code: MVVLGIDPGSLATGYGVVSGDGRESFRALSCGLIRLHPRKSHAVRVGEIYRELSELIGELKPDRVAIETAFVGKNVQSALKLGQVRGAIMALSFNSGVPIFEYAPREVKSAVTGRGGAAKEQVAFMVASMLSLSSVPKPFDVTDALGVALCDLLRCGGGQKERQTDMKGSGGGLCGWGDFVRASPDRVL.

Catalysis depends on residues D7, E68, and D141. D7, E68, and D141 together coordinate Mg(2+).

This sequence belongs to the RuvC family. In terms of assembly, homodimer which binds Holliday junction (HJ) DNA. The HJ becomes 2-fold symmetrical on binding to RuvC with unstacked arms; it has a different conformation from HJ DNA in complex with RuvA. In the full resolvosome a probable DNA-RuvA(4)-RuvB(12)-RuvC(2) complex forms which resolves the HJ. Mg(2+) is required as a cofactor.

It is found in the cytoplasm. The enzyme catalyses Endonucleolytic cleavage at a junction such as a reciprocal single-stranded crossover between two homologous DNA duplexes (Holliday junction).. In terms of biological role, the RuvA-RuvB-RuvC complex processes Holliday junction (HJ) DNA during genetic recombination and DNA repair. Endonuclease that resolves HJ intermediates. Cleaves cruciform DNA by making single-stranded nicks across the HJ at symmetrical positions within the homologous arms, yielding a 5'-phosphate and a 3'-hydroxyl group; requires a central core of homology in the junction. The consensus cleavage sequence is 5'-(A/T)TT(C/G)-3'. Cleavage occurs on the 3'-side of the TT dinucleotide at the point of strand exchange. HJ branch migration catalyzed by RuvA-RuvB allows RuvC to scan DNA until it finds its consensus sequence, where it cleaves and resolves the cruciform DNA. This is Crossover junction endodeoxyribonuclease RuvC from Chlorobium phaeovibrioides (strain DSM 265 / 1930) (Prosthecochloris vibrioformis (strain DSM 265)).